A 213-amino-acid polypeptide reads, in one-letter code: Adenylate kinase (213 aa).

14–19 (GSGKGT) is an ATP binding site. Residues 34-63 (SSGELFRSAIDSASPLGIKAAEYINQGLLV) form an NMP region. Residues Ser-35, Arg-40, 61 to 63 (LLV), 89 to 92 (GFPR), and Gln-96 contribute to the AMP site. The LID stretch occupies residues 129 to 162 (SRFICPSCKHVYNQNQGLSECPTCQMKLVRRSDD). Residue Arg-130 coordinates ATP. Residues Cys-133 and Cys-136 each coordinate Zn(2+). An ATP-binding site is contributed by 139 to 140 (VY). Cys-149 and Cys-152 together coordinate Zn(2+). Positions 159 and 170 each coordinate AMP. ATP is bound at residue Ala-198.

The protein belongs to the adenylate kinase family. In terms of assembly, monomer.

The protein localises to the cytoplasm. The catalysed reaction is AMP + ATP = 2 ADP. It participates in purine metabolism; AMP biosynthesis via salvage pathway; AMP from ADP: step 1/1. Catalyzes the reversible transfer of the terminal phosphate group between ATP and AMP. Plays an important role in cellular energy homeostasis and in adenine nucleotide metabolism. The chain is Adenylate kinase from Chlamydia abortus (strain DSM 27085 / S26/3) (Chlamydophila abortus).